The chain runs to 408 residues: Gustatory receptor 10a (408 aa).

The Cytoplasmic portion of the chain corresponds to 1-20; the sequence is MTSPDERKSFWERHEFKFYR. Residues 21-38 traverse the membrane as a helical segment; the sequence is YGHVYALIYGQVVIDYVP. Residues 39-48 lie on the Extracellular side of the membrane; it reads QRALKRGVKV. The helical transmembrane segment at 49-69 threads the bilayer; the sequence is LLIAYGHLFSMLLIVVLPGYF. The Cytoplasmic portion of the chain corresponds to 70–86; it reads CYHFRTLTDTLDRRLQL. A helical membrane pass occupies residues 87-107; the sequence is LFYVSFTNTAIKYATVIVTYV. The Extracellular segment spans residues 108 to 144; the sequence is ANTVHFEAINQRCTMQRTHLEFEFKNAPQEPKRPFEF. The chain crosses the membrane as a helical span at residues 145–165; it reads FMYFKFCLINLMMMIQVCGIF. Topologically, residues 166-270 are cytoplasmic; sequence AQYGEVGKGS…RESFRMHQFQ (105 aa). A helical transmembrane segment spans residues 271–291; the sequence is LIGLMLSTLINNLTNFYTLFH. The Extracellular portion of the chain corresponds to 292 to 304; the sequence is MLAKQSLEEVSYP. A helical membrane pass occupies residues 305–325; it reads VVVGSVYATGFYIDTYIVALI. Over 326–381 the chain is Cytoplasmic; that stretch reads NEHIKLELEAVALTMRRFAEPREMDERLTREIEHLSLELLNYQPPMLCGLLHLDRR. The helical transmembrane segment at 382-402 threads the bilayer; it reads LVYLIAVTAFSYFITLVQFDL. Topologically, residues 403–408 are extracellular; that stretch reads YLRKKS.

Belongs to the insect chemoreceptor superfamily. Gustatory receptor (GR) family. Gr10a subfamily. In terms of tissue distribution, expressed in the medial aspect of the third antennal segment, and in neurons of the terminal external chemosensory organ of larvae.

It is found in the cell membrane. Probable gustatory receptor which mediates acceptance or avoidance behavior, depending on its substrates. The sequence is that of Gustatory receptor 10a (Gr10a) from Drosophila melanogaster (Fruit fly).